The chain runs to 413 residues: E3 ubiquitin-protein ligase makorin (413 aa).

C3H1-type zinc fingers lie at residues 2–29 (PRHE…HDVA) and 30–57 (TRNE…HTRP). The tract at residues 61–85 (ELPSCSTPQTSQNQQNLQNSGQRVR) is disordered. The span at 66 to 82 (STPQTSQNQQNLQNSGQ) shows a compositional bias: low complexity. The C3H1-type 3 zinc finger occupies 138 to 167 (QAQLMMCPYHQKSGDCNRQDMDCPFAHGNY). The RING-type zinc-finger motif lies at 213–267 (CGICMENIFEKNLRFGILNGCQHCFCLDCIRQWRSKDQENVELATKTVRSCPECR). A C3H1-type 4 zinc finger spans residues 296 to 327 (NTKRKICKYYSNERSRGACPFGNKCFYKHQLP).

As to quaternary structure, component of a complex at least containing lep-2, lin-28 and the long non-coding RNA lep-5, which mediates the degradation of lin-28. In terms of tissue distribution, expressed in seam, tail tip, and other hypodermal cells, head and tail neurons, the pharynx, intestine and the developing hermaphrodite somatic gonad. Not expressed in body wall muscle cells.

It is found in the cytoplasm. The enzyme catalyses S-ubiquitinyl-[E2 ubiquitin-conjugating enzyme]-L-cysteine + [acceptor protein]-L-lysine = [E2 ubiquitin-conjugating enzyme]-L-cysteine + N(6)-ubiquitinyl-[acceptor protein]-L-lysine.. It participates in protein modification; protein ubiquitination. Functionally, E3 ubiquitin ligase which catalyzes the covalent attachment of ubiquitin moieties onto substrate proteins. Promotes the larval to adult transition by binding to the long non-coding RNA lep-5 to target the heterochronic protein lin-28 for degradation by the proteasome. This association and degradation of lin-28 also controls the timing of the sexual differentiation of individual neurons in males including the AIM, AWA, ADF, ASJ and CEM neurons. Plays a role in governing the developmental timing of male tail tip morphogenesis. Plays a role in two aspects of male mating behavior: response to hermaphrodite contact and vulva location. May play a role in the detection of preferred food sources. The protein is E3 ubiquitin-protein ligase makorin of Caenorhabditis elegans.